A 52-amino-acid chain; its full sequence is MATHKPLGFKLRLASAGKSNRNPPAWVMVKTDRKVTYNTKRRNWRRVKLKLG.

This sequence belongs to the eukaryotic ribosomal protein eL39 family.

The chain is Large ribosomal subunit protein eL39 from Caldivirga maquilingensis (strain ATCC 700844 / DSM 13496 / JCM 10307 / IC-167).